The primary structure comprises 122 residues: Large ribosomal subunit protein uL18 (122 aa).

Belongs to the universal ribosomal protein uL18 family. As to quaternary structure, part of the 50S ribosomal subunit; part of the 5S rRNA/L5/L18/L25 subcomplex. Contacts the 5S and 23S rRNAs.

Its function is as follows. This is one of the proteins that bind and probably mediate the attachment of the 5S RNA into the large ribosomal subunit, where it forms part of the central protuberance. The chain is Large ribosomal subunit protein uL18 from Pseudothermotoga lettingae (strain ATCC BAA-301 / DSM 14385 / NBRC 107922 / TMO) (Thermotoga lettingae).